We begin with the raw amino-acid sequence, 859 residues long: Heat shock protein 105 kDa (859 aa).

S2 is subject to N-acetylserine. K471 is subject to N6-acetyllysine. Phosphoserine is present on residues S509 and S510. 2 disordered regions span residues 515 to 585 (MDCQ…PPEA) and 797 to 859 (CEPV…MDLD). Residues 533–555 (QQDNNEAGTQPQVQTDGHQTSQS) show a composition bias toward polar residues. Residue S558 is modified to Phosphoserine. A Phosphothreonine modification is found at T562. Basic and acidic residues-rich tracts occupy residues 564 to 585 (EENKIPDADKANEKKVDQPPEA) and 806 to 815 (PKIESPKLER). At S810 the chain carries Phosphoserine. Phosphothreonine is present on T816. Positions 822 to 831 (TDKKEEDLDG) are enriched in basic and acidic residues. The span at 850–859 (EKSSINMDLD) shows a compositional bias: polar residues.

This sequence belongs to the heat shock protein 70 family. In terms of assembly, interacts with HSPA8/HSC70. Interacts with HSPA1A (via NBD) and HSPA1B (via NBD). Post-translationally, phosphorylation on Ser-509 may be important for regulation of the HSPA8/HSC70 chaperone activity.

The protein resides in the cytoplasm. In terms of biological role, acts as a nucleotide-exchange factor (NEF) for chaperone proteins HSPA1A and HSPA1B, promoting the release of ADP from HSPA1A/B thereby triggering substrate release. Prevents the aggregation of denatured proteins in cells under severe stress, on which the ATP levels decrease markedly. Inhibits HSPA8/HSC70 ATPase and chaperone activities. This is Heat shock protein 105 kDa (HSPH1) from Bos taurus (Bovine).